We begin with the raw amino-acid sequence, 570 residues long: Zinc finger protein 76 (570 aa).

Lysine 24 is covalently cross-linked (Glycyl lysine isopeptide (Lys-Gly) (interchain with G-Cter in SUMO2)). 3 consecutive repeat copies span residues 34 to 45, 62 to 73, and 88 to 99. Residues 34–99 are 3 X 12 AA approximate repeats; sequence IQLEDGTTAY…LEDGSTAYIH (66 aa). C2H2-type zinc fingers lie at residues 165-189, 195-219, 225-249, 255-279, 285-309, 315-339, and 345-368; these read FRCG…ERAH, YRCD…VRTH, YKCP…VRTH, FQCP…VRTH, YTCP…VRIH, YVCT…HVVH, and YTCS…RSAH. Positions 365–401 are disordered; that stretch reads RSAHGELEATEESEQALYEQQQLEAASAAEESPPPKR. Low complexity predominate over residues 379–395; that stretch reads QALYEQQQLEAASAAEE.

It belongs to the krueppel C2H2-type zinc-finger protein family. Testis.

Its subcellular location is the nucleus. Functionally, may be involved in transcriptional regulation. This is Zinc finger protein 76 (ZNF76) from Homo sapiens (Human).